We begin with the raw amino-acid sequence, 217 residues long: Somatotropin (217 aa).

A signal peptide spans 1–26 (MATGSRTSLLLAFTLLCLPQLKEAGA). Residue histidine 44 participates in Zn(2+) binding. An intrachain disulfide couples cysteine 79 to cysteine 191. Serine 132 is subject to Phosphoserine. A Zn(2+)-binding site is contributed by glutamate 200. A disulfide bond links cysteine 208 and cysteine 215.

The protein belongs to the somatotropin/prolactin family.

The protein resides in the secreted. Functionally, plays an important role in growth control. Its major role in stimulating body growth is to stimulate the liver and other tissues to secrete IGF1. It stimulates both the differentiation and proliferation of myoblasts. It also stimulates amino acid uptake and protein synthesis in muscle and other tissues. The polypeptide is Somatotropin (GH1) (Saimiri boliviensis boliviensis (Bolivian squirrel monkey)).